The primary structure comprises 207 residues: Large ribosomal subunit protein bL25 (207 aa).

It belongs to the bacterial ribosomal protein bL25 family. CTC subfamily. As to quaternary structure, part of the 50S ribosomal subunit; part of the 5S rRNA/L5/L18/L25 subcomplex. Contacts the 5S rRNA. Binds to the 5S rRNA independently of L5 and L18.

Its function is as follows. This is one of the proteins that binds to the 5S RNA in the ribosome where it forms part of the central protuberance. This Bordetella petrii (strain ATCC BAA-461 / DSM 12804 / CCUG 43448) protein is Large ribosomal subunit protein bL25.